The chain runs to 300 residues: MRCLALDIGGTKIAAAIVKNGEIEQRQQIHTPRENVVEGMHQALGKLLADYEGQFDYVAVASTGIINNGILSALNPKNLGGLAEFPLKASIAKHTDKPIGLLNDAQAATYAEYQLQNSEQVSNFVFITVSTGVGGGIVLNQILQTGSRGIAGHIGHTLADPNGAICGCGRRGCVEAIASGRAIEAVSSQWEEPCDPKEVFERFRKNDEKATALVERSAKAIANLIADLVISLDIQKIAIGGSVGLAEGYLPLVEKYLQDFPSIYCCEIESAKFGQDAGLIGAAYWVKDVLLDKPEGTIYG.

ATP-binding positions include 5-12 (ALDIGGTK) and 132-139 (GVGGGIVL). 4 residues coordinate Zn(2+): His156, Cys166, Cys168, and Cys173.

It belongs to the ROK (NagC/XylR) family. NanK subfamily. As to quaternary structure, homodimer.

It catalyses the reaction an N-acyl-D-mannosamine + ATP = an N-acyl-D-mannosamine 6-phosphate + ADP + H(+). It participates in amino-sugar metabolism; N-acetylneuraminate degradation; D-fructose 6-phosphate from N-acetylneuraminate: step 2/5. Catalyzes the phosphorylation of N-acetylmannosamine (ManNAc) to ManNAc-6-P. The polypeptide is N-acetylmannosamine kinase (Haemophilus influenzae (strain PittGG)).